Reading from the N-terminus, the 430-residue chain is Serine hydroxymethyltransferase (430 aa).

Gly-120–Ile-122 contacts (6S)-5,6,7,8-tetrahydrofolate. Lys-226 bears the N6-(pyridoxal phosphate)lysine mark.

It belongs to the SHMT family. Homodimer. Requires pyridoxal 5'-phosphate as cofactor.

It is found in the cytoplasm. It functions in the pathway amino-acid biosynthesis; glycine biosynthesis; glycine from L-serine: step 1/1. Catalyzes the reversible interconversion of serine and glycine with a modified folate serving as the one-carbon carrier. Also exhibits a pteridine-independent aldolase activity toward beta-hydroxyamino acids, producing glycine and aldehydes, via a retro-aldol mechanism. The chain is Serine hydroxymethyltransferase from Pyrobaculum calidifontis (strain DSM 21063 / JCM 11548 / VA1).